The primary structure comprises 133 residues: Carbohydrate-binding protein AWN (133 aa).

Ala-1 bears the N-acetylalanine mark. 2 cysteine pairs are disulfide-bonded: Cys-9-Cys-30 and Cys-53-Cys-74. The 102-residue stretch at 9–110 (CGGVLRDPPG…SPFHIYYYAD (102 aa)) folds into the CUB domain. The interval 73 to 110 (ICGGISLVFRSSSNIATIKYLRTSGQRASPFHIYYYAD) is heparin-binding.

The protein belongs to the spermadhesin family.

The protein resides in the secreted. Functionally, mediates the binding of spermatozoa to component(s) of the egg's zona pellucida by a carbohydrate-binding mechanism. It is a secretory component of the male accessory glands being coated to the sperm surface at the time of ejaculation. The protein is Carbohydrate-binding protein AWN of Equus caballus (Horse).